Here is a 499-residue protein sequence, read N- to C-terminus: MSTRKAVIGYYFIPTNQINNYTETDTSVVPFPVSNITPAKAKQLTHINFSFLDINSNLECAWDPATNDAKARDVVNRLTALKAHNPSLRIMFSIGGWYYSNDLGVSHANYVNAVKTPAARTKFAQSCVRIMKDYGFDGVDIDWEYPQAAEVDGFIAALQEIRTLLNQQTIADGRQALPYQLTIAGAGGAFFLSRYYSKLAQIVAPLDYINLMTYDLAGPWEKITNHQAALFGDAAGPTFYNALREANLGWSWEELTRAFPSPFSLTVDAAVQQHLMMEGVPSAKIVMGVPFYGRAFKGVSGGNGGQYSSHSTPGEDPYPNADYWLVGCDECVRDKDPRIASYRQLEQMLQGNYGYQRLWNDKTKTPYLYHAQNGLFVTYDDAESFKYKAKYIKQQQLGGVMFWHLGQDNRNGDLLAALDRYFNAADYDDSQLDMGTGLRYTGVGPGNLPIMTAPAYVPGTTYAQGALVSYQGYVWQTKWGYITSAPGSDSAWLKVGRLA.

An N-terminal signal peptide occupies residues 1-41 (MSTRKAVIGYYFIPTNQINNYTETDTSVVPFPVSNITPAKA). In terms of domain architecture, GH18 spans 42 to 425 (KQLTHINFSF…AALDRYFNAA (384 aa)). Residues 68–69 (DA) and 95–98 (GGWY) contribute to the chitin site. The active-site Proton donor is the E144. Residues Y145, 212-215 (MTYD), and W403 contribute to the chitin site. Residues 438–498 (LRYTGVGPGN…DSAWLKVGRL (61 aa)) enclose the Chitin-binding type-3 domain.

The protein belongs to the glycosyl hydrolase 18 family. Chitinase class II subfamily.

The enzyme catalyses Random endo-hydrolysis of N-acetyl-beta-D-glucosaminide (1-&gt;4)-beta-linkages in chitin and chitodextrins.. This is Chitinase B (chiB) from Serratia marcescens.